A 220-amino-acid polypeptide reads, in one-letter code: Photosynthetic NDH subunit of lumenal location 3, chloroplastic (220 aa).

The transit peptide at 1-35 (MAHFIDLNSLTNTLPSLPKLPESRKTGKSSGFACR) directs the protein to the chloroplast. A thylakoid-targeting transit peptide spans 36–77 (RTEEFQEPDSVQITRRMTLGFAVSIGLTGILGENNVSLAQDN).

This sequence belongs to the PsbQ family. In terms of assembly, part of the chloroplast NDH complex, composed of a mixture of chloroplast and nucleus encoded subunits. Component of the NDH lumenal subcomplex, at least composed of PnsL1, PnsL2, PnsL3, PnsL4 and PnsL5.

Its subcellular location is the plastid. It is found in the chloroplast thylakoid membrane. Functionally, NDH shuttles electrons from NAD(P)H:plastoquinone, via FMN and iron-sulfur (Fe-S) centers, to quinones in the photosynthetic chain and possibly in a chloroplast respiratory chain. The immediate electron acceptor for the enzyme in this species is believed to be plastoquinone. Couples the redox reaction to proton translocation, and thus conserves the redox energy in a proton gradient. Required for both formation and activity of the chloroplast NAD(P)H dehydrogenase (NDH) complex. The protein is Photosynthetic NDH subunit of lumenal location 3, chloroplastic of Arabidopsis thaliana (Mouse-ear cress).